Consider the following 88-residue polypeptide: Large ribosomal subunit protein eL31 (88 aa).

It belongs to the eukaryotic ribosomal protein eL31 family.

The polypeptide is Large ribosomal subunit protein eL31 (Saccharolobus islandicus (strain Y.N.15.51 / Yellowstone #2) (Sulfolobus islandicus)).